The sequence spans 363 residues: 3-methyl-D-ornithine--L-lysine ligase (363 aa).

ATP is bound at residue K10. 11-12 contacts L-lysine; that stretch reads LQ. ATP contacts are provided by residues D31, 49-50, and 72-73; these read DV and EN. E72 is an L-lysine binding site. Residues K104, K131, S138, and 160–163 contribute to the ADP site; that span reads EEYV. D-ornithine contacts are provided by residues 169-171 and D225; that span reads SLE. Residues E227, E239, and D241 each coordinate Mg(2+). E239 is a binding site for ADP. D-ornithine-binding positions include 243–248 and E302; that span reads RFPSQT. L-lysine-binding residues include S246 and E302.

The protein belongs to the PylC family. Mg(2+) is required as a cofactor.

It carries out the reaction (3R)-3-methyl-D-ornithine + L-lysine + ATP = (3R)-3-methyl-D-ornithyl-N(6)-L-lysine + ADP + phosphate + H(+). It participates in amino-acid biosynthesis; L-pyrrolysine biosynthesis. Is required for the biosynthesis of pyrrolysine. Catalyzes the ATP-dependent ligation between (3R)-3-methyl-D-ornithine and L-lysine, leading to (3R)-3-methyl-D-ornithyl-N6-L-lysine. The polypeptide is 3-methyl-D-ornithine--L-lysine ligase (Methanosarcina barkeri (strain Fusaro / DSM 804)).